We begin with the raw amino-acid sequence, 366 residues long: DNA-directed RNA polymerase subunit alpha (366 aa).

Residues 1-233 (MVREKVRVST…DLFLPFLHAE (233 aa)) form an alpha N-terminal domain (alpha-NTD) region. Residues 264–366 (KNEIALKSIF…KDEMGFESLE (103 aa)) form an alpha C-terminal domain (alpha-CTD) region.

Belongs to the RNA polymerase alpha chain family. In plastids the minimal PEP RNA polymerase catalytic core is composed of four subunits: alpha, beta, beta', and beta''. When a (nuclear-encoded) sigma factor is associated with the core the holoenzyme is formed, which can initiate transcription.

Its subcellular location is the plastid. It localises to the chloroplast. It carries out the reaction RNA(n) + a ribonucleoside 5'-triphosphate = RNA(n+1) + diphosphate. DNA-dependent RNA polymerase catalyzes the transcription of DNA into RNA using the four ribonucleoside triphosphates as substrates. The chain is DNA-directed RNA polymerase subunit alpha from Oenothera elata subsp. hookeri (Hooker's evening primrose).